The sequence spans 155 residues: UPF0178 protein TDE_2151 (155 aa).

Belongs to the UPF0178 family.

The chain is UPF0178 protein TDE_2151 from Treponema denticola (strain ATCC 35405 / DSM 14222 / CIP 103919 / JCM 8153 / KCTC 15104).